We begin with the raw amino-acid sequence, 154 residues long: Interleukin-2 (154 aa).

Residues 1 to 20 form the signal peptide; that stretch reads MYRMQLLSCIALSLALITNS. A glycan (O-linked (GalNAc...) threonine) is linked at threonine 23. A disulfide bond links cysteine 78 and cysteine 126.

This sequence belongs to the IL-2 family.

The protein resides in the secreted. Its function is as follows. Cytokine produced by activated CD4-positive helper T-cells and to a lesser extend activated CD8-positive T-cells and natural killer (NK) cells that plays pivotal roles in the immune response and tolerance. Binds to a receptor complex composed of either the high-affinity trimeric IL-2R (IL2RA/CD25, IL2RB/CD122 and IL2RG/CD132) or the low-affinity dimeric IL-2R (IL2RB and IL2RG). Interaction with the receptor leads to oligomerization and conformation changes in the IL-2R subunits resulting in downstream signaling starting with phosphorylation of JAK1 and JAK3. In turn, JAK1 and JAK3 phosphorylate the receptor to form a docking site leading to the phosphorylation of several substrates including STAT5. This process leads to activation of several pathways including STAT, phosphoinositide-3-kinase/PI3K and mitogen-activated protein kinase/MAPK pathways. Functions as a T-cell growth factor and can increase NK-cell cytolytic activity as well. Promotes strong proliferation of activated B-cells and subsequently immunoglobulin production. Plays a pivotal role in regulating the adaptive immune system by controlling the survival and proliferation of regulatory T-cells, which are required for the maintenance of immune tolerance. Moreover, participates in the differentiation and homeostasis of effector T-cell subsets, including Th1, Th2, Th17 as well as memory CD8-positive T-cells. The chain is Interleukin-2 (IL2) from Saimiri sciureus (Common squirrel monkey).